We begin with the raw amino-acid sequence, 1714 residues long: Bifunctional glutamate/proline--tRNA ligase (1714 aa).

Residues 166–191 (DAKVKRSPQSSKEQTPAKTGERKQEG) are disordered. Residues 170–754 (KRSPQSSKEQ…ASELDSQISQ (585 aa)) are glutamate--tRNA ligase. Positions 172–182 (SPQSSKEQTPA) are enriched in polar residues. The short motif at 209–220 (PPEASGYLHIGH) is the 'HIGH' region element. The short motif at 438–442 (VLSKR) is the 'KMSKS' region element. Disordered stretches follow at residues 718–754 (PTSGLKVNAPDAKATKKASSPVSSSGQASELDSQISQ), 791–817 (GKDWKPGQTSASSAPVPAASSSSANDA), and 943–962 (GTTAPAPAAAPVKVKQEKNP). 2 stretches are compositionally biased toward low complexity: residues 734–746 (KASSPVSSSGQAS) and 800–817 (SASSAPVPAASSSSANDA). WHEP-TRS domains follow at residues 744–800 (QASE…GQTS), 816–872 (DAVS…GTVP), 890–946 (SVAQ…GTTA), 969–1025 (TVNT…GTVA), and 1044–1100 (DVGS…DAKS). A 6 X 57 AA approximate repeats region spans residues 755-1201 (QGDLVRDLKS…KPAKPVKKEP (447 aa)). Disordered stretches follow at residues 1093-1119 (DWTPDAKSEPAVVKKEASPVSMASPAK) and 1168-1210 (FPVA…GAVK). The segment covering 1094–1109 (WTPDAKSEPAVVKKEA) has biased composition (basic and acidic residues). S1110 is modified (phosphoserine). Residues 1118 to 1174 (AKDELTQEINAQGEKVRAAKGNKAAKEVIDAEVAKLLALKAKYKEVTGTDFPVAGRG) form the WHEP-TRS 6 domain. Gly residues predominate over residues 1172–1181 (GRGGGGGGGS). The interval 1207–1714 (GAVKKQTRLG…KFYTLFGRSY (508 aa)) is proline--tRNA ligase. L-proline contacts are provided by residues 1322–1324 (TSE) and R1353. Residues R1353, E1355, R1364, T1365, Q1438, and T1441 each contribute to the ATP site. Q1438 provides a ligand contact to Mg(2+). Residue H1443 coordinates L-proline. Residues T1476 and R1478 each coordinate ATP. Zn(2+)-binding residues include C1648, C1653, and C1695.

This sequence in the N-terminal section; belongs to the class-I aminoacyl-tRNA synthetase family. Glutamate--tRNA ligase type 2 subfamily. The protein in the C-terminal section; belongs to the class-II aminoacyl-tRNA synthetase family. As to quaternary structure, component of the multisynthetase complex which is comprised of a bifunctional glutamyl-prolyl-tRNA synthetase, the monospecific isoleucyl, leucyl, glutaminyl, methionyl, lysyl, arginyl, and aspartyl-tRNA synthetases as well as three auxiliary proteins, p18, p48 and p43.

The enzyme catalyses tRNA(Glu) + L-glutamate + ATP = L-glutamyl-tRNA(Glu) + AMP + diphosphate. It catalyses the reaction tRNA(Pro) + L-proline + ATP = L-prolyl-tRNA(Pro) + AMP + diphosphate. In terms of biological role, catalyzes the attachment of both L-glutamate and L-proline to their cognate tRNAs in a two-step reaction where the amino acid is first activated by ATP to form a covalent intermediate with AMP. Subsequently, the activated amino acid is transferred to the acceptor end of the cognate tRNA to form L-glutamyl-tRNA(Glu) and L-prolyl-tRNA(Pro). This chain is Bifunctional glutamate/proline--tRNA ligase, found in Drosophila melanogaster (Fruit fly).